Reading from the N-terminus, the 417-residue chain is NADH-quinone oxidoreductase subunit D (417 aa).

It belongs to the complex I 49 kDa subunit family. As to quaternary structure, NDH-1 is composed of 14 different subunits. Subunits NuoB, C, D, E, F, and G constitute the peripheral sector of the complex.

It is found in the cell inner membrane. The catalysed reaction is a quinone + NADH + 5 H(+)(in) = a quinol + NAD(+) + 4 H(+)(out). Functionally, NDH-1 shuttles electrons from NADH, via FMN and iron-sulfur (Fe-S) centers, to quinones in the respiratory chain. The immediate electron acceptor for the enzyme in this species is believed to be ubiquinone. Couples the redox reaction to proton translocation (for every two electrons transferred, four hydrogen ions are translocated across the cytoplasmic membrane), and thus conserves the redox energy in a proton gradient. This is NADH-quinone oxidoreductase subunit D from Burkholderia lata (strain ATCC 17760 / DSM 23089 / LMG 22485 / NCIMB 9086 / R18194 / 383).